The chain runs to 286 residues: ATP synthase gamma chain (286 aa).

This sequence belongs to the ATPase gamma chain family. As to quaternary structure, F-type ATPases have 2 components, CF(1) - the catalytic core - and CF(0) - the membrane proton channel. CF(1) has five subunits: alpha(3), beta(3), gamma(1), delta(1), epsilon(1). CF(0) has three main subunits: a, b and c.

Its subcellular location is the cell membrane. In terms of biological role, produces ATP from ADP in the presence of a proton gradient across the membrane. The gamma chain is believed to be important in regulating ATPase activity and the flow of protons through the CF(0) complex. This chain is ATP synthase gamma chain, found in Bacillus anthracis (strain A0248).